The following is a 302-amino-acid chain: Glutaminase (302 aa).

Residues Ser61, Asn111, Glu155, Asn162, Tyr186, Tyr238, and Val256 each coordinate substrate.

This sequence belongs to the glutaminase family. In terms of assembly, homotetramer.

It carries out the reaction L-glutamine + H2O = L-glutamate + NH4(+). The chain is Glutaminase from Stutzerimonas stutzeri (strain A1501) (Pseudomonas stutzeri).